The sequence spans 625 residues: Phosphomethylpyrimidine synthase (625 aa).

Substrate contacts are provided by residues Asn-231, Met-260, Tyr-289, His-325, 345-347 (SRG), 386-389 (DGLR), and Glu-425. His-429 lines the Zn(2+) pocket. Residue Tyr-452 participates in substrate binding. A Zn(2+)-binding site is contributed by His-493. Residues Cys-573, Cys-576, and Cys-581 each contribute to the [4Fe-4S] cluster site.

Belongs to the ThiC family. As to quaternary structure, homodimer. The cofactor is [4Fe-4S] cluster.

The catalysed reaction is 5-amino-1-(5-phospho-beta-D-ribosyl)imidazole + S-adenosyl-L-methionine = 4-amino-2-methyl-5-(phosphooxymethyl)pyrimidine + CO + 5'-deoxyadenosine + formate + L-methionine + 3 H(+). It participates in cofactor biosynthesis; thiamine diphosphate biosynthesis. Functionally, catalyzes the synthesis of the hydroxymethylpyrimidine phosphate (HMP-P) moiety of thiamine from aminoimidazole ribotide (AIR) in a radical S-adenosyl-L-methionine (SAM)-dependent reaction. This is Phosphomethylpyrimidine synthase from Acinetobacter baumannii (strain SDF).